The following is a 223-amino-acid chain: MASKLLRAVILGPPGSGKGTVCQRIAQNFGLQHLSSGHFLRENIKANTEVGEMAKQYIEKSLLVPDHVITRLMMSELENRRGQHWLLDGFPRTLGQAEALDKICEVDLVISLNIPFETLKDRLSRRWIHPPSGRVYNLDFNPPHVHGIDDVTGEPLVQQEDDKPEAVAARLRQYKDVAKPVIELYKSRGVLHQFSGTETNKIWPYVYTLFSNKITPIQSKEAY.

A ribonucleoside 5'-triphosphate is bound at residue 15 to 20; the sequence is GSGKGT. The NMP stretch occupies residues 35–64; the sequence is SSGHFLRENIKANTEVGEMAKQYIEKSLLV. The AMP site is built by S36 and R41. N6-succinyllysine is present on K60. AMP is bound by residues 62–64, 89–92, and Q96; these read LLV and GFPR. Positions 125 to 162 are LID; sequence RRWIHPPSGRVYNLDFNPPHVHGIDDVTGEPLVQQEDD. A ribonucleoside 5'-triphosphate contacts are provided by residues R126 and 135 to 136; that span reads VY. Residue R170 coordinates AMP. K175 carries the post-translational modification N6-acetyllysine. 2 positions are modified to N6-acetyllysine; alternate: K179 and K186. Residues K179 and K186 each carry the N6-succinyllysine; alternate modification. T199 is a binding site for a ribonucleoside 5'-triphosphate.

The protein belongs to the adenylate kinase family. AK3 subfamily. In terms of assembly, monomer. Interacts with SLC25A5/ANT2.

It is found in the mitochondrion matrix. The enzyme catalyses a ribonucleoside 5'-phosphate + ATP = a ribonucleoside 5'-diphosphate + ADP. It carries out the reaction AMP + ATP = 2 ADP. The catalysed reaction is GTP + AMP = GDP + ADP. It catalyses the reaction CMP + ATP = CDP + ADP. The enzyme catalyses GTP + CMP = CDP + GDP. It carries out the reaction dAMP + ATP = dADP + ADP. The catalysed reaction is dCMP + ATP = dCDP + ADP. It catalyses the reaction a 2'-deoxyribonucleoside 5'-diphosphate + ATP = a 2'-deoxyribonucleoside 5'-triphosphate + ADP. The enzyme catalyses a ribonucleoside 5'-diphosphate + ATP = a ribonucleoside 5'-triphosphate + ADP. It carries out the reaction GDP + ATP = GTP + ADP. The catalysed reaction is CDP + GTP = CTP + GDP. It catalyses the reaction CDP + ATP = CTP + ADP. The enzyme catalyses UDP + ATP = UTP + ADP. It carries out the reaction GTP + UDP = UTP + GDP. The catalysed reaction is dADP + GTP = dATP + GDP. It catalyses the reaction dCDP + GTP = dCTP + GDP. The enzyme catalyses dCDP + ATP = dCTP + ADP. It carries out the reaction dGDP + ATP = dGTP + ADP. The catalysed reaction is dTDP + GTP = dTTP + GDP. It catalyses the reaction dTDP + ATP = dTTP + ADP. Its function is as follows. Broad-specificity mitochondrial nucleoside phosphate kinase involved in cellular nucleotide homeostasis by catalyzing nucleoside-phosphate interconversions. Similar to other adenylate kinases, preferentially catalyzes the phosphorylation of the nucleoside monophosphate AMP with ATP as phosphate donor to produce ADP. Phosphorylates only AMP when using GTP as phosphate donor. In vitro, can also catalyze the phosphorylation of CMP, dAMP and dCMP and use GTP as an alternate phosphate donor. Moreover, exhibits a diphosphate kinase activity, producing ATP, CTP, GTP, UTP, TTP, dATP, dCTP and dGTP from the corresponding diphosphate substrates with either ATP or GTP as phosphate donors. Plays a role in controlling cellular ATP levels by regulating phosphorylation and activation of the energy sensor protein kinase AMPK. Plays a protective role in the cellular response to oxidative stress. The chain is Adenylate kinase 4, mitochondrial from Pongo abelii (Sumatran orangutan).